A 379-amino-acid polypeptide reads, in one-letter code: Cytochrome b (379 aa).

The next 4 helical transmembrane spans lie at 34-54 (FGSLLGICLITQILTGLLLAT), 78-99 (WLIRNLHANGASFFFICIYLHI), 114-134 (WNIGIILLLTLMATAFVGYVL), and 179-199 (FFALHFLLPFLIVSLSIIHLT). 2 residues coordinate heme b: histidine 84 and histidine 98. Residues histidine 183 and histidine 197 each contribute to the heme b site. Histidine 202 provides a ligand contact to a ubiquinone. Transmembrane regions (helical) follow at residues 227–247 (TKDMLGFTLMFFPLLTLAFFF), 289–309 (LGGVLALTASVLILFLSPLLH), 321–341 (MSQLLFWLLIANLLILTWIGS), and 348–368 (FIIIGQVASFTYFFTLLFLFP).

The protein belongs to the cytochrome b family. In terms of assembly, the cytochrome bc1 complex contains 11 subunits: 3 respiratory subunits (MT-CYB, CYC1 and UQCRFS1), 2 core proteins (UQCRC1 and UQCRC2) and 6 low-molecular weight proteins (UQCRH/QCR6, UQCRB/QCR7, UQCRQ/QCR8, UQCR10/QCR9, UQCR11/QCR10 and a cleavage product of UQCRFS1). This cytochrome bc1 complex then forms a dimer. Heme b serves as cofactor.

Its subcellular location is the mitochondrion inner membrane. Its function is as follows. Component of the ubiquinol-cytochrome c reductase complex (complex III or cytochrome b-c1 complex) that is part of the mitochondrial respiratory chain. The b-c1 complex mediates electron transfer from ubiquinol to cytochrome c. Contributes to the generation of a proton gradient across the mitochondrial membrane that is then used for ATP synthesis. The sequence is that of Cytochrome b (MT-CYB) from Tinamus major (Great tinamou).